A 186-amino-acid chain; its full sequence is Ribosome-recycling factor (186 aa).

The protein belongs to the RRF family.

The protein resides in the cytoplasm. Functionally, responsible for the release of ribosomes from messenger RNA at the termination of protein biosynthesis. May increase the efficiency of translation by recycling ribosomes from one round of translation to another. The sequence is that of Ribosome-recycling factor from Leifsonia xyli subsp. xyli (strain CTCB07).